The following is a 328-amino-acid chain: Interleukin-12 subunit beta (328 aa).

Positions 1–22 are cleaved as a signal peptide; that stretch reads MCHQQLVISWFSLVFLASPLMA. The 78-residue stretch at 29 to 106 folds into the Ig-like C2-type domain; the sequence is DVYVVELDWY…LSHSLLLLHK (78 aa). C50 and C90 are joined by a disulfide. Residues N125, N135, N222, and N303 are each glycosylated (N-linked (GlcNAc...) asparagine). The region spanning 237 to 328 is the Fibronectin type-III domain; the sequence is PPKNLQLKPL…WSEWASVPCS (92 aa).

It belongs to the IL-12B family. As to quaternary structure, heterodimer with IL12A; disulfide-linked. The heterodimer is known as interleukin IL-12. Heterodimer with IL23A; disulfide-linked. The heterodimer is known as interleukin IL-23. Also secreted as a monomer. Interacts with NBR1; this interaction promotes IL-12 secretion.

It is found in the secreted. Functionally, cytokine that can act as a growth factor for activated T and NK cells, enhance the lytic activity of NK/lymphokine-activated killer cells, and stimulate the production of IFN-gamma by resting PBMC. In terms of biological role, associates with IL23A to form the IL-23 interleukin, a heterodimeric cytokine which functions in innate and adaptive immunity. IL-23 may constitute with IL-17 an acute response to infection in peripheral tissues. IL-23 binds to a heterodimeric receptor complex composed of IL12RB1 and IL23R, activates the Jak-Stat signaling cascade, stimulates memory rather than naive T-cells and promotes production of pro-inflammatory cytokines. IL-23 induces autoimmune inflammation and thus may be responsible for autoimmune inflammatory diseases and may be important for tumorigenesis. In Papio anubis (Olive baboon), this protein is Interleukin-12 subunit beta (IL12B).